The chain runs to 450 residues: Divalent metal cation transporter MntH (450 aa).

The next 11 helical transmembrane spans lie at 34–54, 61–81, 108–128, 141–161, 170–190, 212–232, 263–283, 305–325, 361–381, 383–403, and 422–442; these read LSFL…GNWI, AQYG…AMLL, IAII…IAEV, IPLI…LFIM, AIVG…VYIS, GILY…NLYL, IQLS…ASLF, PVLG…ALLA, SLAV…AAKI, QLLV…LIPL, and VNII…YLIV.

It belongs to the NRAMP family.

Its subcellular location is the cell membrane. Its function is as follows. H(+)-stimulated, divalent metal cation uptake system. The sequence is that of Divalent metal cation transporter MntH from Staphylococcus aureus (strain bovine RF122 / ET3-1).